Consider the following 532-residue polypeptide: MNFGRVNPAQTLDAQGITGLGEVHYNLIEPALVEAAVTRGEGRLGRGGAFLCSTGAFTGRSPKDKFVVRTPSVEDTIWWENNAPMDPAAFDRLHADMLEHMKGRTYFVQDLFAGADPELRLDVRMVTELAWHGLFIRHMLRRPERAELDSFVPDWTVINCPSFKADPERHGCRTDTVIVLNFERKLILIANTEYAGENKKSVFTLLNYILPGKGVMAMHCSANHALGDTDDAAVFFGLSGTGKTTLSADPSRTLIGDDEHGWSDRGTFNFEGGCYAKTINLSAEAEPEIYATTSKFATVVENMVYDEETLELDFNDDSLTANTRCAYPLDYISNASESGLGGHPKNVIMLTCDAFGVLPPIARLTPAQAMYHFLSGFTSKVAGTERGVTEPQPTFSTCFGAPFMPRRPEVYGKLLQEKIAKHGATCWLVNTGWTGGAYGTGKRMPIKATRALLTAALDGSLSGVQFRRDPNFGFEVPVDLHGVDAKLLDPRSTWADPAAYDQQAKKLVEMFANNFAQYVPFIDADVKAAAIG.

Substrate contacts are provided by Arg60, Tyr194, and Lys200. Residues Lys200, His219, and Gly237–Thr245 contribute to the ATP site. Mn(2+) contacts are provided by Lys200 and His219. Asp258 serves as a coordination point for Mn(2+). 3 residues coordinate ATP: Glu286, Arg324, and Thr449. Position 324 (Arg324) interacts with substrate.

This sequence belongs to the phosphoenolpyruvate carboxykinase (ATP) family. Mn(2+) serves as cofactor.

The protein localises to the cytoplasm. The catalysed reaction is oxaloacetate + ATP = phosphoenolpyruvate + ADP + CO2. Its pathway is carbohydrate biosynthesis; gluconeogenesis. Functionally, involved in the gluconeogenesis. Catalyzes the conversion of oxaloacetate (OAA) to phosphoenolpyruvate (PEP) through direct phosphoryl transfer between the nucleoside triphosphate and OAA. This chain is Phosphoenolpyruvate carboxykinase (ATP), found in Cereibacter sphaeroides (strain ATCC 17029 / ATH 2.4.9) (Rhodobacter sphaeroides).